Reading from the N-terminus, the 157-residue chain is Thioredoxin-T (157 aa).

Residues Val-2–Gly-107 enclose the Thioredoxin domain. An intrachain disulfide couples Cys-32 to Cys-35. The segment at Glu-132 to His-157 is disordered. The span at Ser-147–His-157 shows a compositional bias: basic and acidic residues.

The protein belongs to the thioredoxin family. In terms of tissue distribution, testis specific. Not expressed in the embryo. Becomes progressively more strongly expressed during larval and pupal development. In testis, it is strongly expressed in young spermatocytes, and postmeiotic spermatid stages, then expression decreases at the nuclear elongation stage. Strongly expressed in the waste bag, in which material no longer needed for the mature sperm is eliminated. Not expressed in the stem cells and spermatogonial cells.

It localises to the nucleus. The protein localises to the chromosome. Functionally, probably participates in various redox reactions through the reversible oxidation of its active center dithiol to a disulfide and catalyzes dithiol-disulfide exchange reactions. Its tissue specificity suggests a regulatory role in the germline. In Drosophila melanogaster (Fruit fly), this protein is Thioredoxin-T (TrxT).